We begin with the raw amino-acid sequence, 244 residues long: DnaJ homolog subfamily C member 4 (244 aa).

The 66-residue stretch at 37 to 102 (NYYELLGVHP…ESRRNYDHQL (66 aa)) folds into the J domain. Residues 96 to 127 (RNYDHQLHSASPPKSSGSTAEPKYTQQTHSSW) form a disordered region. Positions 103 to 127 (HSASPPKSSGSTAEPKYTQQTHSSW) are enriched in polar residues. Residues 159-178 (VLGYCLLLMVAGMGLHYVAF) form a helical membrane-spanning segment. The segment at 208–244 (RANRARIQQERQQRQQPRAEPSLPPESSRIMPQDTSP) is disordered.

It localises to the membrane. In Mus musculus (Mouse), this protein is DnaJ homolog subfamily C member 4 (Dnajc4).